The chain runs to 396 residues: Serine/threonine-protein kinase GRIK1 (396 aa).

Residues Glu22–Ser65 are disordered. A compositionally biased stretch (acidic residues) spans Gly48–Glu60. In terms of domain architecture, Protein kinase spans Phe108 to Ile369. ATP contacts are provided by residues Ile114–Val122 and Lys137. The residue at position 154 (Thr154) is a Phosphothreonine; by autocatalysis. Asp239 (proton acceptor) is an active-site residue. Ser261 carries the phosphoserine; by KIN10 modification.

This sequence belongs to the protein kinase superfamily. Ser/Thr protein kinase family. In terms of assembly, associates with the SNF1-related protein kinase (SnRK) complex. Interacts with AL1, a geminivirus (TGMV) protein essential for viral replication. As to expression, expressed in shoot apical meristem, leaf primordium and emerging petiole (at protein level).

The protein localises to the cytoplasm. It localises to the nucleus. It catalyses the reaction L-seryl-[protein] + ATP = O-phospho-L-seryl-[protein] + ADP + H(+). The enzyme catalyses L-threonyl-[protein] + ATP = O-phospho-L-threonyl-[protein] + ADP + H(+). Its activity is regulated as follows. Activated when autophosphorylated at Thr-154 and inactivated when phosphorylated at Ser-261 by SnRK1.1/KIN10. In terms of biological role, activates SnRK1.1/KIN10 and SnRK1.2/KIN11 by phosphorylation of their activation-loop 'Thr-198' and 'Thr-176', respectively. Required for the regulation by SnRK1 kinases of the transcription of a large set of genes, the modification the activity of metabolic enzymes, and the control of various nutrient-responsive cellular developmental processes. In Arabidopsis thaliana (Mouse-ear cress), this protein is Serine/threonine-protein kinase GRIK1 (GRIK1).